We begin with the raw amino-acid sequence, 492 residues long: 3-ketoacyl-CoA synthase 5 (492 aa).

2 consecutive transmembrane segments (helical) span residues 20-40 (LINNFLTLLLIPVIATVAIEL) and 59-79 (LLHILCSSFLIIFVSTVYFMS). An FAE domain is found at 76-365 (YFMSKPRTVY…FLSSLIGRKI (290 aa)). Active-site residues include cysteine 220, histidine 299, histidine 383, histidine 387, histidine 416, and asparagine 420.

This sequence belongs to the thiolase-like superfamily. Chalcone/stilbene synthases family. In terms of tissue distribution, expressed in siliques, flowers, leaves and seedlings.

It localises to the membrane. It catalyses the reaction a very-long-chain acyl-CoA + malonyl-CoA + H(+) = a very-long-chain 3-oxoacyl-CoA + CO2 + CoA. It participates in lipid metabolism; fatty acid biosynthesis. With respect to regulation, inhibited by K3 herbicides such as alachlor, allidochlor, anilofos, cafenstrole and flufenacet. Strongly inhibited by metazachlor and mefluidide. Its function is as follows. Mediates mostly the synthesis of VLCFAs from 26 to 30 carbons in length (e.g. C20:1, C26, C28, C30). This chain is 3-ketoacyl-CoA synthase 5, found in Arabidopsis thaliana (Mouse-ear cress).